The following is a 353-amino-acid chain: Photosystem II D2 protein (353 aa).

Threonine 2 is subject to N-acetylthreonine. Phosphothreonine is present on threonine 2. Residues 41 to 61 (CAYFALGGWFTGTTFVTSWYT) form a helical membrane-spanning segment. A chlorophyll a-binding site is contributed by histidine 118. Residues 125 to 141 (GFMLRQFELARSVQLRP) form a helical membrane-spanning segment. Pheophytin a contacts are provided by glutamine 130 and asparagine 143. Residues 153–166 (VFVSVFLIYPLGQS) form a helical membrane-spanning segment. Histidine 198 provides a ligand contact to chlorophyll a. The chain crosses the membrane as a helical span at residues 208–228 (AALLCAIHGATVENTLFEDGD). A plastoquinone is bound by residues histidine 215 and phenylalanine 262. Residue histidine 215 coordinates Fe cation. Residue histidine 269 participates in Fe cation binding. A helical transmembrane segment spans residues 279 to 295 (GLWMSALGVVGLALNLR).

Belongs to the reaction center PufL/M/PsbA/D family. As to quaternary structure, PSII is composed of 1 copy each of membrane proteins PsbA, PsbB, PsbC, PsbD, PsbE, PsbF, PsbH, PsbI, PsbJ, PsbK, PsbL, PsbM, PsbT, PsbX, PsbY, PsbZ, Psb30/Ycf12, at least 3 peripheral proteins of the oxygen-evolving complex and a large number of cofactors. It forms dimeric complexes. The D1/D2 heterodimer binds P680, chlorophylls that are the primary electron donor of PSII, and subsequent electron acceptors. It shares a non-heme iron and each subunit binds pheophytin, quinone, additional chlorophylls, carotenoids and lipids. There is also a Cl(-1) ion associated with D1 and D2, which is required for oxygen evolution. The PSII complex binds additional chlorophylls, carotenoids and specific lipids. serves as cofactor.

The protein resides in the plastid. The protein localises to the chloroplast thylakoid membrane. The catalysed reaction is 2 a plastoquinone + 4 hnu + 2 H2O = 2 a plastoquinol + O2. Photosystem II (PSII) is a light-driven water:plastoquinone oxidoreductase that uses light energy to abstract electrons from H(2)O, generating O(2) and a proton gradient subsequently used for ATP formation. It consists of a core antenna complex that captures photons, and an electron transfer chain that converts photonic excitation into a charge separation. The D1/D2 (PsbA/PsbD) reaction center heterodimer binds P680, the primary electron donor of PSII as well as several subsequent electron acceptors. D2 is needed for assembly of a stable PSII complex. The polypeptide is Photosystem II D2 protein (Aethionema grandiflorum (Persian stone-cress)).